A 100-amino-acid polypeptide reads, in one-letter code: Large ribosomal subunit protein eL36A (100 aa).

The residue at position 2 (threonine 2) is an N-acetylthreonine.

Belongs to the eukaryotic ribosomal protein eL36 family. In terms of assembly, component of the large ribosomal subunit (LSU). Mature yeast ribosomes consist of a small (40S) and a large (60S) subunit. The 40S small subunit contains 1 molecule of ribosomal RNA (18S rRNA) and 33 different proteins (encoded by 57 genes). The large 60S subunit contains 3 rRNA molecules (25S, 5.8S and 5S rRNA) and 46 different proteins (encoded by 81 genes). N-terminally acetylated by acetyltransferase NatA.

It localises to the cytoplasm. Functionally, component of the ribosome, a large ribonucleoprotein complex responsible for the synthesis of proteins in the cell. The small ribosomal subunit (SSU) binds messenger RNAs (mRNAs) and translates the encoded message by selecting cognate aminoacyl-transfer RNA (tRNA) molecules. The large subunit (LSU) contains the ribosomal catalytic site termed the peptidyl transferase center (PTC), which catalyzes the formation of peptide bonds, thereby polymerizing the amino acids delivered by tRNAs into a polypeptide chain. The nascent polypeptides leave the ribosome through a tunnel in the LSU and interact with protein factors that function in enzymatic processing, targeting, and the membrane insertion of nascent chains at the exit of the ribosomal tunnel. This chain is Large ribosomal subunit protein eL36A, found in Saccharomyces cerevisiae (strain ATCC 204508 / S288c) (Baker's yeast).